The primary structure comprises 186 residues: TATA-box-binding protein E (186 aa).

A run of 2 repeats spans residues 10–86 and 101–179.

This sequence belongs to the TBP family.

Its function is as follows. General factor that plays a role in the activation of archaeal genes transcribed by RNA polymerase. Binds specifically to the TATA box promoter element which lies close to the position of transcription initiation. The polypeptide is TATA-box-binding protein E (tbpE) (Halobacterium salinarum (strain ATCC 700922 / JCM 11081 / NRC-1) (Halobacterium halobium)).